Here is a 929-residue protein sequence, read N- to C-terminus: Protein unc-45 homolog A (929 aa).

TPR repeat units follow at residues 6–39 (VEQL…DATP), 43–76 (AVLH…DGGD), and 77–110 (VKAL…EPKN). Lys-55 carries the post-translational modification N6-acetyllysine. Residue Lys-468 is modified to N6-acetyllysine.

As to quaternary structure, interacts with PGR isoforms A and B as well as with NR3C1 in the absence of ligand, and with HSP90AB1. Binding to HSP90AB1 involves 2 UNC45A monomers per HSP90AB1 dimer.

The protein localises to the cytoplasm. The protein resides in the perinuclear region. It localises to the nucleus. May act as co-chaperone for HSP90 (Potential). Prevents the stimulation of HSP90AB1 ATPase activity by AHSA1. Positive factor in promoting PGR function in the cell. May be necessary for proper folding of myosin (Potential). Necessary for normal cell proliferation. Necessary for normal myotube formation and myosin accumulation during muscle cell development. May play a role in erythropoiesis in stroma cells in the spleen. This Pongo abelii (Sumatran orangutan) protein is Protein unc-45 homolog A (UNC45A).